The following is a 190-amino-acid chain: UPF0301 protein DP2218 (190 aa).

The protein belongs to the UPF0301 (AlgH) family.

The sequence is that of UPF0301 protein DP2218 from Desulfotalea psychrophila (strain LSv54 / DSM 12343).